The sequence spans 428 residues: Ribosome biogenesis protein WDR12 homolog (428 aa).

Positions 13-97 are ubiquitin-like (UBL) domain; it reads LQVHFTTKQK…EDTIELEYVE (85 aa). WD repeat units follow at residues 109–146, 148–190, 197–236, 259–297, 299–338, 344–384, and 388–426; these read LHDDWVSAVQAKDGWILTGTYDNTVNLWNTKGKHKLTI, GHVA…NTAE, GHERGVGCIAVNPAKTQMASGSMDTMLKIWSTELQADKGE, GHREFVSGVQWIDNTTIATCSWDHTIKLWDLSMGGIKTE, TGNKSFFDLSYSPLNGMIITASPDKNLRLYDPRSKHGNFV, GHSQ…APIF, and GHEDKVLACDWSNPKYILSGGSDNAVRVFKSRIAVDNTK.

Belongs to the WD repeat WDR12/YTM1 family.

It is found in the nucleus. It localises to the nucleolus. The protein resides in the nucleoplasm. Required for maturation of ribosomal RNAs and formation of the large ribosomal subunit. This chain is Ribosome biogenesis protein WDR12 homolog, found in Anopheles gambiae (African malaria mosquito).